Here is a 338-residue protein sequence, read N- to C-terminus: Heat-inducible transcription repressor HrcA (338 aa).

It belongs to the HrcA family.

Negative regulator of class I heat shock genes (grpE-dnaK-dnaJ and groELS operons). Prevents heat-shock induction of these operons. This chain is Heat-inducible transcription repressor HrcA, found in Nitrosomonas eutropha (strain DSM 101675 / C91 / Nm57).